Here is a 483-residue protein sequence, read N- to C-terminus: Myosin-binding protein H (483 aa).

The span at 1 to 15 (MTGKATSEASVSTPE) shows a compositional bias: polar residues. Positions 1-78 (MTGKATSEAS…PEPPSEDVPS (78 aa)) are disordered. 3 positions are modified to phosphothreonine: threonine 2, threonine 6, and threonine 26. A compositionally biased stretch (low complexity) spans 41 to 66 (QEQAPEPQKPQAQDPAAPAASAMPAA). Positions 79-174 (APLRLTLEDV…LDQPVHIQEI (96 aa)) constitute a Fibronectin type-III 1 domain. The region spanning 178 to 266 (PKIRVPRHLR…EGLEAKASID (89 aa)) is the Ig-like C2-type 1 domain. In terms of domain architecture, Fibronectin type-III 2 spans 275–370 (PPSSIKLLDV…TKELAHIHKA (96 aa)). The region spanning 388-472 (PSFTQPLADH…INVLGEASVD (85 aa)) is the Ig-like C2-type 2 domain.

It belongs to the immunoglobulin superfamily. MyBP family. In terms of tissue distribution, skeletal muscle. Expressed at low levels in heart ventricles.

Functionally, binds to myosin; probably involved in interaction with thick myofilaments in the A-band. This chain is Myosin-binding protein H (Mybph), found in Mus musculus (Mouse).